The following is a 72-amino-acid chain: MIIPWQGLAPDTLDNLIESFVLREGTDYGEHERSFEQKVADVKRQLQSGEAVLVWSELHETVNIMPKKQFRE.

It belongs to the UPF0270 family.

This is UPF0270 protein YheU from Salmonella agona (strain SL483).